The following is a 708-amino-acid chain: Lactotransferrin (708 aa).

The first 19 residues, 1–19 (MKLFVPALLSLGALGLCLA), serve as a signal peptide directing secretion. 2 Transferrin-like domains span residues 25-352 (VRWC…NLRE) and 364-693 (VVWC…NLKK). Disulfide bonds link Cys-28/Cys-64 and Cys-38/Cys-55. Asp-79 contacts Fe(3+). Lys-92 is an active-site residue. A Fe(3+)-binding site is contributed by Tyr-111. 5 cysteine pairs are disulfide-bonded: Cys-134–Cys-217, Cys-176–Cys-192, Cys-179–Cys-202, Cys-189–Cys-200, and Cys-250–Cys-264. Positions 140, 142, and 143 each coordinate hydrogencarbonate. Tyr-211 contributes to the Fe(3+) binding site. An N-linked (GlcNAc...) (high mannose) asparagine glycan is attached at Asn-252. His-272 is a binding site for Fe(3+). Ser-278 functions as the Nucleophile in the catalytic mechanism. N-linked (GlcNAc...) asparagine glycosylation occurs at Asn-300. 2 cysteine pairs are disulfide-bonded: Cys-367–Cys-399 and Cys-377–Cys-390. The N-linked (GlcNAc...) (complex) asparagine; alternate glycan is linked to Asn-387. N-linked (GlcNAc...) (high mannose) asparagine; alternate glycosylation occurs at Asn-387. A glycan (N-linked (GlcNAc...) (hybrid) asparagine; alternate) is linked at Asn-387. Fe(3+) is bound by residues Asp-414 and Tyr-452. Cystine bridges form between Cys-424/Cys-703, Cys-444/Cys-666, Cys-476/Cys-551, Cys-500/Cys-694, Cys-510/Cys-524, Cys-521/Cys-534, Cys-592/Cys-606, and Cys-644/Cys-649. Positions 478, 482, 484, and 485 each coordinate hydrogencarbonate. Asn-495 is a glycosylation site (N-linked (GlcNAc...) (complex) asparagine; alternate). A glycan (N-linked (GlcNAc...) (high mannose) asparagine; alternate) is linked at Asn-495. N-linked (GlcNAc...) (hybrid) asparagine; alternate glycosylation is present at Asn-495. Residue Tyr-545 participates in Fe(3+) binding. The N-linked (GlcNAc...) (high mannose) asparagine glycan is linked to Asn-564. Residue His-614 coordinates Fe(3+).

The protein belongs to the transferrin family. In terms of assembly, monomer. Found in a complex with LTF, CLU, EPPIN and SEMG1. Found in a complex with MPO and LTF; interacts directly with CP, allows Fe(3+) incorporation into LTF and activation of CP ferroxidase activity. In terms of processing, poly-N-acetyllactosaminic carbohydrate moiety seems to be needed for TLR4 activation.

It localises to the secreted. The protein localises to the cytoplasmic granule. Transferrins are iron binding transport proteins which can bind two Fe(3+) ions in association with the binding of an anion, usually bicarbonate. Functionally, major iron-binding and multifunctional protein found in exocrine fluids such as breast milk and mucosal secretions. Has antimicrobial activity, which depends on the extracellular cation concentration. Antimicrobial properties include bacteriostasis, which is related to its ability to sequester free iron and thus inhibit microbial growth, as well as direct bactericidal properties leading to the release of lipopolysaccharides from the bacterial outer membrane. Can also prevent bacterial biofilm development in P.aeruginosa infection. Has weak antifungal activity against C.albicans. Has anabolic, differentiating and anti-apoptotic effects on osteoblasts and can also inhibit osteoclastogenesis, possibly playing a role in the regulation of bone growth. Promotes binding of species C adenoviruses to epithelial cells, promoting adenovirus infection. Can inhibit papillomavirus infections. Stimulates the TLR4 signaling pathway leading to NF-kappa-B activation and subsequent pro-inflammatory cytokine production while also interfering with the lipopolysaccharide (LPS)-stimulated TLR4 signaling. Inhibits neutrophil granulocyte migration to sites of apoptosis, when secreted by apoptotic cells. Stimulates VEGFA-mediated endothelial cell migration and proliferation. Binds heparin, chondroitin sulfate and possibly other glycosaminoglycans (GAGs). Also binds specifically to pneumococcal surface protein A (PspA), the lipid A portion of bacterial lipopolysaccharide (LPS), lysozyme and DNA. Its function is as follows. Lactoferricin binds to the bacterial surface and is crucial for the bactericidal functions. Has some antiviral activity against papillomavirus infection. N-terminal region shows strong antifungal activity against C.albicans. Contains two BBXB heparin-binding consensus sequences that appear to form the predominate functional GAG-binding site. In terms of biological role, the lactotransferrin transferrin-like domain 1 functions as a serine protease of the peptidase S60 family that cuts arginine rich regions. This function contributes to the antimicrobial activity. Shows a preferential cleavage at -Arg-Ser-Arg-Arg-|- and -Arg-Arg-Ser-Arg-|-, and of Z-Phe-Arg-|-aminomethylcoumarin sites. The polypeptide is Lactotransferrin (LTF) (Capra hircus (Goat)).